We begin with the raw amino-acid sequence, 310 residues long: Lymphotoxin-beta (310 aa).

Topologically, residues 1-27 (MGALGLQGRGGRPQGTGCLLLAVAGAT) are cytoplasmic. The chain crosses the membrane as a helical; Signal-anchor for type II membrane protein span at residues 28-48 (SLVTLLLAVPITVLAVLALVP). Residues 49 to 310 (QEQGGLVMES…LGKCLHSANV (262 aa)) are Extracellular-facing. The segment at 67–86 (QGLSKSNGLPSRLHSQIPSS) is disordered. Residues 138–293 (PAAHLIGAWM…GKTFFGAVMV (156 aa)) form the THD domain. An N-linked (GlcNAc...) asparagine glycan is attached at asparagine 272.

This sequence belongs to the tumor necrosis factor family. Heterotrimer of either two LTB and one LTA subunits or (less prevalent) two LTA and one LTB subunits.

Its subcellular location is the membrane. Cytokine that binds to LTBR/TNFRSF3. May play a specific role in immune response regulation. Provides the membrane anchor for the attachment of the heterotrimeric complex to the cell surface. This is Lymphotoxin-beta (LTB) from Marmota monax (Woodchuck).